The chain runs to 138 residues: Small ribosomal subunit protein uS11c (138 aa).

The tract at residues 1 to 22 is disordered; that stretch reads MAKPIPKIGSRKNARSGSRKHL. The span at 9-22 shows a compositional bias: basic residues; it reads GSRKNARSGSRKHL.

Belongs to the universal ribosomal protein uS11 family. Part of the 30S ribosomal subunit.

It is found in the plastid. The protein resides in the chloroplast. This chain is Small ribosomal subunit protein uS11c, found in Lotus japonicus (Lotus corniculatus var. japonicus).